The chain runs to 256 residues: Ubiquinone/menaquinone biosynthesis C-methyltransferase UbiE (256 aa).

Residues threonine 79, aspartate 100, and 128–129 each bind S-adenosyl-L-methionine; that span reads DA.

Belongs to the class I-like SAM-binding methyltransferase superfamily. MenG/UbiE family.

The catalysed reaction is a 2-demethylmenaquinol + S-adenosyl-L-methionine = a menaquinol + S-adenosyl-L-homocysteine + H(+). It carries out the reaction a 2-methoxy-6-(all-trans-polyprenyl)benzene-1,4-diol + S-adenosyl-L-methionine = a 5-methoxy-2-methyl-3-(all-trans-polyprenyl)benzene-1,4-diol + S-adenosyl-L-homocysteine + H(+). The protein operates within quinol/quinone metabolism; menaquinone biosynthesis; menaquinol from 1,4-dihydroxy-2-naphthoate: step 2/2. It functions in the pathway cofactor biosynthesis; ubiquinone biosynthesis. In terms of biological role, methyltransferase required for the conversion of demethylmenaquinol (DMKH2) to menaquinol (MKH2) and the conversion of 2-polyprenyl-6-methoxy-1,4-benzoquinol (DDMQH2) to 2-polyprenyl-3-methyl-6-methoxy-1,4-benzoquinol (DMQH2). The chain is Ubiquinone/menaquinone biosynthesis C-methyltransferase UbiE from Ectopseudomonas mendocina (strain ymp) (Pseudomonas mendocina).